An 883-amino-acid polypeptide reads, in one-letter code: Valine--tRNA ligase (883 aa).

A 'HIGH' region motif is present at residues 51-61; the sequence is PNVTGKLHLGH. Residues 527 to 531 carry the 'KMSKS' region motif; the sequence is KMSKS. Position 530 (Lys-530) interacts with ATP. Residues 811–847 are a coiled coil; sequence LEALIDLNVEIARLEKELEKWNKEVARVQGKLNNERF.

This sequence belongs to the class-I aminoacyl-tRNA synthetase family. ValS type 1 subfamily. As to quaternary structure, monomer.

It is found in the cytoplasm. The catalysed reaction is tRNA(Val) + L-valine + ATP = L-valyl-tRNA(Val) + AMP + diphosphate. Functionally, catalyzes the attachment of valine to tRNA(Val). As ValRS can inadvertently accommodate and process structurally similar amino acids such as threonine, to avoid such errors, it has a 'posttransfer' editing activity that hydrolyzes mischarged Thr-tRNA(Val) in a tRNA-dependent manner. In Listeria monocytogenes serovar 1/2a (strain ATCC BAA-679 / EGD-e), this protein is Valine--tRNA ligase.